Here is a 521-residue protein sequence, read N- to C-terminus: GMP synthase [glutamine-hydrolyzing] (521 aa).

The 195-residue stretch at 9–203 folds into the Glutamine amidotransferase type-1 domain; the sequence is KILILDFGSQ…ISGICQCEKN (195 aa). Cys-86 serves as the catalytic Nucleophile. Residues His-177 and Glu-179 contribute to the active site. One can recognise a GMPS ATP-PPase domain in the interval 204-396; the sequence is WTTDNIIAKL…LSIPPHIIYR (193 aa). ATP is bound at residue 231 to 237; the sequence is SGGVDSL.

As to quaternary structure, homodimer.

It carries out the reaction XMP + L-glutamine + ATP + H2O = GMP + L-glutamate + AMP + diphosphate + 2 H(+). It functions in the pathway purine metabolism; GMP biosynthesis; GMP from XMP (L-Gln route): step 1/1. In terms of biological role, catalyzes the synthesis of GMP from XMP. The polypeptide is GMP synthase [glutamine-hydrolyzing] (Ruthia magnifica subsp. Calyptogena magnifica).